The sequence spans 315 residues: Putative quercetin 2,3-dioxygenase PA1205 (315 aa).

Residues H77, H79, H121, and E123 each contribute to the a divalent metal cation site.

This sequence belongs to the pirin family. Requires a divalent metal cation as cofactor.

The enzyme catalyses quercetin + O2 = 2-(3,4-dihydroxybenzoyloxy)-4,6-dihydroxybenzoate + CO. The protein operates within flavonoid metabolism; quercetin degradation. Its function is as follows. Putative quercetin 2,3-dioxygenase. In Pseudomonas aeruginosa (strain ATCC 15692 / DSM 22644 / CIP 104116 / JCM 14847 / LMG 12228 / 1C / PRS 101 / PAO1), this protein is Putative quercetin 2,3-dioxygenase PA1205.